The sequence spans 333 residues: Electron transfer flavoprotein subunit alpha, mitochondrial (333 aa).

Residues 1-19 constitute a mitochondrion transit peptide; sequence MFRAAAPGQLRRAASLLRF. A domain I region spans residues 20 to 204; it reads QSTLVIAEHA…EISEWLDQKL (185 aa). The residue at position 59 (K59) is an N6-acetyllysine; alternate. Position 59 is an N6-succinyllysine; alternate (K59). K62 is modified (N6-acetyllysine). K69 is subject to N6-acetyllysine; alternate. K69 is subject to N6-succinyllysine; alternate. K75 is modified (N6-acetyllysine). K85 bears the N6-acetyllysine; alternate mark. K85 is modified (N6-succinyllysine; alternate). The residue at position 93 (T93) is a Phosphothreonine. N6-acetyllysine is present on residues K101 and K139. S140 is subject to Phosphoserine. K158 carries the N6-acetyllysine; alternate modification. The residue at position 158 (K158) is an N6-succinyllysine; alternate. An N6-acetyllysine modification is found at K164. K187 is modified (N6-succinyllysine). K203 carries the N6-acetyllysine; alternate modification. The residue at position 203 (K203) is an N6-succinyllysine; alternate. The segment at 205–333 is domain II; the sequence is TKSDRPELTG…PEMTEILKKK (129 aa). At K216 the chain carries N6-succinyllysine. R223 contacts FAD. Residues K226 and K232 each carry the N6-acetyllysine; alternate modification. 2 positions are modified to N6-succinyllysine; alternate: K226 and K232. Residues S248, 263–266, 281–286, and N300 contribute to the FAD site; these read VGQT and SGAIQH. An N6-succinyllysine modification is found at K301. 318–319 provides a ligand contact to FAD; it reads DL.

This sequence belongs to the ETF alpha-subunit/FixB family. As to quaternary structure, heterodimer composed of ETFA and ETFB. Identified in a complex that contains ETFA, ETFB and ETFRF1. Interaction with ETFRF1 promotes dissociation of the bound FAD and loss of electron transfer activity. Interacts with TASOR. The cofactor is FAD. In terms of processing, the N-terminus is blocked.

It is found in the mitochondrion matrix. Its function is as follows. Heterodimeric electron transfer flavoprotein that accepts electrons from several mitochondrial dehydrogenases, including acyl-CoA dehydrogenases, glutaryl-CoA and sarcosine dehydrogenase. It transfers the electrons to the main mitochondrial respiratory chain via ETF-ubiquinone oxidoreductase (ETF dehydrogenase). Required for normal mitochondrial fatty acid oxidation and normal amino acid metabolism. The sequence is that of Electron transfer flavoprotein subunit alpha, mitochondrial (ETFA) from Homo sapiens (Human).